The following is a 170-amino-acid chain: Acetyl-CoA decarbonylase/synthase complex subunit epsilon 2 (170 aa).

It belongs to the CdhB family. As to quaternary structure, heterotetramer of two alpha and two epsilon subunits. The ACDS complex is made up of alpha, epsilon, beta, gamma and delta subunits with a probable stoichiometry of (alpha(2)epsilon(2))(4)-beta(8)-(gamma(1)delta(1))(8).

The protein operates within one-carbon metabolism; methanogenesis from acetate. Part of a complex that catalyzes the reversible cleavage of acetyl-CoA, allowing growth on acetate as sole source of carbon and energy. The alpha-epsilon subcomponent functions as a carbon monoxide dehydrogenase. The precise role of the epsilon subunit is unclear; it may have a stabilizing role within the alpha(2)epsilon(2) component and/or be involved in electron transfer to FAD during a potential FAD-mediated CO oxidation. This is Acetyl-CoA decarbonylase/synthase complex subunit epsilon 2 (cdhB2) from Methanosarcina acetivorans (strain ATCC 35395 / DSM 2834 / JCM 12185 / C2A).